The sequence spans 474 residues: UDP-N-acetylmuramate--L-alanine ligase (474 aa).

112-118 is a binding site for ATP; it reads GTHGKTT.

This sequence belongs to the MurCDEF family.

The protein resides in the cytoplasm. The enzyme catalyses UDP-N-acetyl-alpha-D-muramate + L-alanine + ATP = UDP-N-acetyl-alpha-D-muramoyl-L-alanine + ADP + phosphate + H(+). It participates in cell wall biogenesis; peptidoglycan biosynthesis. In terms of biological role, cell wall formation. The chain is UDP-N-acetylmuramate--L-alanine ligase from Cupriavidus taiwanensis (strain DSM 17343 / BCRC 17206 / CCUG 44338 / CIP 107171 / LMG 19424 / R1) (Ralstonia taiwanensis (strain LMG 19424)).